The following is a 93-amino-acid chain: Large ribosomal subunit protein bL31B (93 aa).

Belongs to the bacterial ribosomal protein bL31 family. Type B subfamily. As to quaternary structure, part of the 50S ribosomal subunit.

The sequence is that of Large ribosomal subunit protein bL31B from Pseudomonas syringae pv. tomato (strain ATCC BAA-871 / DC3000).